The chain runs to 347 residues: Phosphoribosylformylglycinamidine cyclo-ligase (347 aa).

Belongs to the AIR synthase family.

It is found in the cytoplasm. The enzyme catalyses 2-formamido-N(1)-(5-O-phospho-beta-D-ribosyl)acetamidine + ATP = 5-amino-1-(5-phospho-beta-D-ribosyl)imidazole + ADP + phosphate + H(+). The protein operates within purine metabolism; IMP biosynthesis via de novo pathway; 5-amino-1-(5-phospho-D-ribosyl)imidazole from N(2)-formyl-N(1)-(5-phospho-D-ribosyl)glycinamide: step 2/2. The sequence is that of Phosphoribosylformylglycinamidine cyclo-ligase from Prochlorococcus marinus (strain MIT 9312).